Consider the following 569-residue polypeptide: Putative ABC transporter ATP-binding protein TTE1589 (569 aa).

ABC transporter domains lie at 8–248 and 309–542; these read IIVK…IGLM and IQAK…LSLK. ATP is bound by residues 43-50 and 342-349; these read GPSGAGKS and GHNGSGKT.

Belongs to the ABC transporter superfamily.

The protein resides in the cell membrane. Functionally, probably part of an ABC transporter complex. Responsible for energy coupling to the transport system. In Caldanaerobacter subterraneus subsp. tengcongensis (strain DSM 15242 / JCM 11007 / NBRC 100824 / MB4) (Thermoanaerobacter tengcongensis), this protein is Putative ABC transporter ATP-binding protein TTE1589.